The following is a 118-amino-acid chain: Holin-like protein CidA 2 (118 aa).

Transmembrane regions (helical) follow at residues 4-26 (VTLLLQVGVLYVFSLVGTWIQGV), 33-52 (GSLIGMLILFLLLSTRVLPL), 62-84 (LIVFLPLFLIPSTTGLMEYGSFL), and 91-113 (IFLLVVASTVVTLIVSGYISQLL).

This sequence belongs to the CidA/LrgA family. CidA subfamily.

The protein resides in the cell membrane. Functionally, increases the activity of extracellular murein hydrolases possibly by mediating their export via hole formation. Inhibited by the antiholin-like proteins LrgAB. In an unstressed cell, the LrgAB products probably inhibit the function of the CidA protein. When a cell is stressed by the addition of antibiotics or by other factors in the environment, CidA possibly oligomerizes within the bacterial cell membrane, creating lesions that disrupt the proton motive force, which in turn results in loss of cell viability. These lesions are also hypothesized to regulate the subsequent cell lysis by either allowing the murein hydrolases access to the cell wall substrate and/or regulating their activity by a possible change in the cell wall pH that results from loss of membrane potential. The sequence is that of Holin-like protein CidA 2 (cidA2) from Bacillus cereus (strain ATCC 14579 / DSM 31 / CCUG 7414 / JCM 2152 / NBRC 15305 / NCIMB 9373 / NCTC 2599 / NRRL B-3711).